A 254-amino-acid chain; its full sequence is N-acetylglucosaminyldiphosphoundecaprenol N-acetyl-beta-D-mannosaminyltransferase (254 aa).

The protein belongs to the glycosyltransferase 26 family. TagA/TarA subfamily.

The enzyme catalyses UDP-N-acetyl-alpha-D-mannosamine + N-acetyl-alpha-D-glucosaminyl-di-trans,octa-cis-undecaprenyl diphosphate = N-acetyl-beta-D-mannosaminyl-(1-&gt;4)-N-acetyl-alpha-D-glucosaminyl di-trans,octa-cis-undecaprenyl diphosphate + UDP + H(+). The protein operates within cell wall biogenesis; poly(ribitol phosphate) teichoic acid biosynthesis. Its function is as follows. Catalyzes the conversion of GlcNAc-PP-undecaprenol into ManNAc-GlcNAc-PP-undecaprenol, the first committed lipid intermediate in the de novo synthesis of teichoic acid. This Staphylococcus aureus (strain NCTC 8325 / PS 47) protein is N-acetylglucosaminyldiphosphoundecaprenol N-acetyl-beta-D-mannosaminyltransferase.